The primary structure comprises 547 residues: Probable bifunctional tRNA threonylcarbamoyladenosine biosynthesis protein (547 aa).

The segment at 1-329 (MKNTFILGIE…FRTDDVNVTW (329 aa)) is kae1. Residues His-113, His-117, and Tyr-134 each coordinate Fe cation. L-threonylcarbamoyladenylate-binding positions include 134 to 138 (YVSGA), Asp-166, Gly-179, Glu-183, and Asn-262. Fe cation is bound at residue Asp-290. The region spanning 340-547 (EISPEAFLRA…EEIKKRARYA (208 aa)) is the Protein kinase domain. ATP contacts are provided by residues 355–363 (LDNGAEAVI) and Lys-377. Residue Asp-464 is the Proton acceptor; for kinase activity of the active site.

In the N-terminal section; belongs to the KAE1 / TsaD family. It in the C-terminal section; belongs to the protein kinase superfamily. Tyr protein kinase family. BUD32 subfamily. Component of the KEOPS complex that consists of Kae1, Bud32, Cgi121 and Pcc1; the whole complex dimerizes. Fe(2+) serves as cofactor.

The protein localises to the cytoplasm. It carries out the reaction L-seryl-[protein] + ATP = O-phospho-L-seryl-[protein] + ADP + H(+). The catalysed reaction is L-threonyl-[protein] + ATP = O-phospho-L-threonyl-[protein] + ADP + H(+). It catalyses the reaction L-threonylcarbamoyladenylate + adenosine(37) in tRNA = N(6)-L-threonylcarbamoyladenosine(37) in tRNA + AMP + H(+). Its function is as follows. Required for the formation of a threonylcarbamoyl group on adenosine at position 37 (t(6)A37) in tRNAs that read codons beginning with adenine. Is a component of the KEOPS complex that is probably involved in the transfer of the threonylcarbamoyl moiety of threonylcarbamoyl-AMP (TC-AMP) to the N6 group of A37. The Kae1 domain likely plays a direct catalytic role in this reaction. The Bud32 domain probably displays kinase activity that regulates Kae1 function. The polypeptide is Probable bifunctional tRNA threonylcarbamoyladenosine biosynthesis protein (Methanosarcina acetivorans (strain ATCC 35395 / DSM 2834 / JCM 12185 / C2A)).